Consider the following 317-residue polypeptide: Pantothenate kinase (317 aa).

ATP is bound at residue 95 to 102 (GSVAVGKS).

This sequence belongs to the prokaryotic pantothenate kinase family.

It localises to the cytoplasm. It catalyses the reaction (R)-pantothenate + ATP = (R)-4'-phosphopantothenate + ADP + H(+). The protein operates within cofactor biosynthesis; coenzyme A biosynthesis; CoA from (R)-pantothenate: step 1/5. In Myxococcus xanthus (strain DK1622), this protein is Pantothenate kinase.